Here is a 414-residue protein sequence, read N- to C-terminus: MKIYLVGGAVRDSLLNLPVKDKDWVVVGGTEKILLERNFQQVGKDFPVFLHPETHEEYALARKERKSGKGYTGFDTDCNSDVTLEEDLIRRDLTINAIAQDEYGNYIDPFQGKKDIECGLIRHVSESFIEDPLRVLRVARFAATLVHLGFKIAEETMLLMCIIVKKQELSYLTSNRIWNETEKALKTLNPHVYFQVLYECNALHFFFPEMYFLYEKKNFLNRSFFKKFCNKNIILMGLAEISLLNKDIDVRFSYLCQFLSVNQIDRNYSKIFFDSYAASIIHSLCKRFKIPSYIRDIAVLNTGFYFFLNTIHYQSSKNIINLFSKVDAWRKPDRVKKLAFLSNFNFLRNFKSEFFCIKSGCFLEKCFSVVKNVSIKLILKKGFKGYEIKQEITRLRIKKLEFWRIKNIKHRFYL.

ATP is bound by residues Gly-8 and Arg-11. Residues Gly-8 and Arg-11 each contribute to the CTP site. Residues Asp-21 and Asp-23 each coordinate Mg(2+). Positions 91, 137, and 140 each coordinate ATP. CTP contacts are provided by Arg-91, Arg-137, and Arg-140.

The protein belongs to the tRNA nucleotidyltransferase/poly(A) polymerase family. Bacterial CCA-adding enzyme type 2 subfamily. It depends on Mg(2+) as a cofactor.

It catalyses the reaction a tRNA precursor + 2 CTP + ATP = a tRNA with a 3' CCA end + 3 diphosphate. It carries out the reaction a tRNA with a 3' CCA end + 2 CTP + ATP = a tRNA with a 3' CCACCA end + 3 diphosphate. Functionally, catalyzes the addition and repair of the essential 3'-terminal CCA sequence in tRNAs without using a nucleic acid template. Adds these three nucleotides in the order of C, C, and A to the tRNA nucleotide-73, using CTP and ATP as substrates and producing inorganic pyrophosphate. tRNA 3'-terminal CCA addition is required both for tRNA processing and repair. Also involved in tRNA surveillance by mediating tandem CCA addition to generate a CCACCA at the 3' terminus of unstable tRNAs. While stable tRNAs receive only 3'-terminal CCA, unstable tRNAs are marked with CCACCA and rapidly degraded. The protein is CCA-adding enzyme of Buchnera aphidicola subsp. Acyrthosiphon pisum (strain Tuc7).